Consider the following 256-residue polypeptide: CD209 antigen-like protein 2 (256 aa).

Topologically, residues 1-50 are cytoplasmic; sequence MSDSKEPRAQPLGLLEEEELITSSMNFFPRDFGFRQTRGYKSLAGCLGHA. The Endocytosis signal signature appears at 14–15; it reads LL. A helical; Signal-anchor for type II membrane protein membrane pass occupies residues 51 to 71; it reads PLVLPLLFFTLFTGLLVAILV. Residues 72 to 240 are Extracellular-facing; sequence QVSKNPSSQR…KSAASCSRDE (169 aa). Intrachain disulfides connect C108–C119, C136–C229, and C208–C221. The C-type lectin domain occupies 114–230; the sequence is FFQGNCYFIS…CSAAKFWICK (117 aa). Ca(2+)-binding residues include E199, N201, I203, E206, N217, and D218.

Predominantly expressed in liver and axillary lymph nodes. At very low levels also found in other tissues.

It is found in the membrane. Probable pathogen-recognition receptor involved in peripheral immune surveillance in liver. May mediate the endocytosis of pathogens which are subsequently degraded in lysosomal compartments. Probably recognizes in a calcium-dependent manner high mannose N-linked oligosaccharides in a variety of pathogen antigens. Is a receptor for ICAM3, probably by binding to mannose-like carbohydrates. This chain is CD209 antigen-like protein 2 (CD209L2), found in Macaca mulatta (Rhesus macaque).